Here is a 367-residue protein sequence, read N- to C-terminus: D-alanine--D-alanine ligase (367 aa).

Residues 150–357 (KKLLASAGLP…YPTLLATMVE (208 aa)) form the ATP-grasp domain. 178 to 233 (RERLGLPVFVKPSRGGSSIGVSRVTAWDELPAAIELARRHDPKVIIEAAVPGRELE) contacts ATP. The Mg(2+) site is built by D312, E324, and N326.

This sequence belongs to the D-alanine--D-alanine ligase family. Mg(2+) serves as cofactor. The cofactor is Mn(2+).

It is found in the cytoplasm. The enzyme catalyses 2 D-alanine + ATP = D-alanyl-D-alanine + ADP + phosphate + H(+). It functions in the pathway cell wall biogenesis; peptidoglycan biosynthesis. Cell wall formation. This chain is D-alanine--D-alanine ligase, found in Mycolicibacterium gilvum (strain PYR-GCK) (Mycobacterium gilvum (strain PYR-GCK)).